Reading from the N-terminus, the 220-residue chain is Large ribosomal subunit protein eL15 (220 aa).

It belongs to the eukaryotic ribosomal protein eL15 family.

The protein is Large ribosomal subunit protein eL15 of Staphylothermus marinus (strain ATCC 43588 / DSM 3639 / JCM 9404 / F1).